Consider the following 624-residue polypeptide: Glucoamylase (624 aa).

The N-terminal stretch at 1–18 (MRQFLALAAAASIAVADS) is a signal peptide. One can recognise a CBM21 domain in the interval 26 to 132 (NSPPDDKAVA…NSQQLNVQVE (107 aa)). N-linked (GlcNAc...) asparagine glycans are attached at residues asparagine 54, asparagine 70, asparagine 98, asparagine 111, asparagine 168, asparagine 267, and asparagine 333. Aspartate 340 serves as the catalytic Proton acceptor. The active-site Proton donor is glutamate 343. 2 N-linked (GlcNAc...) asparagine glycosylation sites follow: asparagine 460 and asparagine 582.

The protein belongs to the glycosyl hydrolase 15 family.

It carries out the reaction Hydrolysis of terminal (1-&gt;4)-linked alpha-D-glucose residues successively from non-reducing ends of the chains with release of beta-D-glucose.. This chain is Glucoamylase (GAA), found in Blastobotrys adeninivorans (Yeast).